The sequence spans 448 residues: JmjC domain-containing protein D (448 aa).

A JmjC domain is found at glutamate 305–proline 448.

This Dictyostelium discoideum (Social amoeba) protein is JmjC domain-containing protein D (jcdD).